A 107-amino-acid polypeptide reads, in one-letter code: Phosphoribosyl-ATP pyrophosphatase (107 aa).

This sequence belongs to the PRA-PH family.

The protein localises to the cytoplasm. The catalysed reaction is 1-(5-phospho-beta-D-ribosyl)-ATP + H2O = 1-(5-phospho-beta-D-ribosyl)-5'-AMP + diphosphate + H(+). Its pathway is amino-acid biosynthesis; L-histidine biosynthesis; L-histidine from 5-phospho-alpha-D-ribose 1-diphosphate: step 2/9. The polypeptide is Phosphoribosyl-ATP pyrophosphatase (Methylobacterium nodulans (strain LMG 21967 / CNCM I-2342 / ORS 2060)).